The primary structure comprises 353 residues: uncharacterized protein (353 aa).

The helical transmembrane segment at 267–287 threads the bilayer; the sequence is GLPLVVIEAMAFGLPIVAFNC.

The protein belongs to the glycosyltransferase group 1 family. Glycosyltransferase 4 subfamily.

Its subcellular location is the membrane. This is an uncharacterized protein from Haemophilus influenzae (strain ATCC 51907 / DSM 11121 / KW20 / Rd).